The following is a 1399-amino-acid chain: Meiosis-specific protein ASY2 (1399 aa).

One can recognise an HORMA domain in the interval 10–248 (QQSLILTTEL…SQHHVLTVKV (239 aa)). Residues 257–266 (PCEDENDNMQ) show a composition bias toward acidic residues. 5 disordered regions span residues 257–281 (PCED…HDDQ), 487–525 (SKPK…SSEP), 617–656 (RLTG…AAPE), 940–974 (PPPP…VDQV), and 1045–1090 (DQDK…AAPK). Residues 267–281 (DDERSKGPDSLHDDQ) show a composition bias toward basic and acidic residues. The segment covering 509 to 523 (SAPPSSEPKSAPPSS) has biased composition (pro residues). The segment covering 617-631 (RLTGNPSNEAQSSRS) has biased composition (polar residues). Residues 1205–1246 (MASLRDAAEIHKAEMSSLNDEVKRLNSREADLQKEFSDLQVA) are a coiled coil.

It localises to the chromosome. The protein resides in the nucleus. Functionally, required for normal meiosis. The sequence is that of Meiosis-specific protein ASY2 from Arabidopsis thaliana (Mouse-ear cress).